The primary structure comprises 471 residues: Ribulose bisphosphate carboxylase large chain (471 aa).

Lysine 5 carries the N6,N6,N6-trimethyllysine modification. Substrate is bound by residues asparagine 114 and threonine 164. Lysine 166 functions as the Proton acceptor in the catalytic mechanism. A substrate-binding site is contributed by lysine 168. Mg(2+) contacts are provided by lysine 192, aspartate 194, and glutamate 195. N6-carboxylysine is present on lysine 192. Catalysis depends on histidine 285, which acts as the Proton acceptor. 3 residues coordinate substrate: arginine 286, histidine 318, and serine 370.

It belongs to the RuBisCO large chain family. Type I subfamily. As to quaternary structure, heterohexadecamer of 8 large chains and 8 small chains; disulfide-linked. The disulfide link is formed within the large subunit homodimers. Mg(2+) serves as cofactor. Post-translationally, the disulfide bond which can form in the large chain dimeric partners within the hexadecamer appears to be associated with oxidative stress and protein turnover.

The protein localises to the plastid. Its subcellular location is the chloroplast. It catalyses the reaction 2 (2R)-3-phosphoglycerate + 2 H(+) = D-ribulose 1,5-bisphosphate + CO2 + H2O. The enzyme catalyses D-ribulose 1,5-bisphosphate + O2 = 2-phosphoglycolate + (2R)-3-phosphoglycerate + 2 H(+). RuBisCO catalyzes two reactions: the carboxylation of D-ribulose 1,5-bisphosphate, the primary event in carbon dioxide fixation, as well as the oxidative fragmentation of the pentose substrate in the photorespiration process. Both reactions occur simultaneously and in competition at the same active site. The protein is Ribulose bisphosphate carboxylase large chain of Deppea grandiflora.